Here is a 128-residue protein sequence, read N- to C-terminus: Large ribosomal subunit protein uL22 (128 aa).

The disordered stretch occupies residues 1–20; that stretch reads MANGHRSQIKRERNAVKDTR. Residues 9-20 are compositionally biased toward basic and acidic residues; that stretch reads IKRERNAVKDTR.

It belongs to the universal ribosomal protein uL22 family. In terms of assembly, part of the 50S ribosomal subunit.

This protein binds specifically to 23S rRNA; its binding is stimulated by other ribosomal proteins, e.g. L4, L17, and L20. It is important during the early stages of 50S assembly. It makes multiple contacts with different domains of the 23S rRNA in the assembled 50S subunit and ribosome. Functionally, the globular domain of the protein is located near the polypeptide exit tunnel on the outside of the subunit, while an extended beta-hairpin is found that lines the wall of the exit tunnel in the center of the 70S ribosome. This Lachnospira eligens (strain ATCC 27750 / DSM 3376 / VPI C15-48 / C15-B4) (Eubacterium eligens) protein is Large ribosomal subunit protein uL22.